The sequence spans 1316 residues: DNA-directed RNA polymerase subunit beta' (1316 aa).

Positions 60, 62, 75, and 78 each coordinate Zn(2+). D535, D537, and D539 together coordinate Mg(2+). Zn(2+) contacts are provided by C891, C968, C975, and C978.

The protein belongs to the RNA polymerase beta' chain family. As to quaternary structure, the RNAP catalytic core consists of 2 alpha, 1 beta, 1 beta' and 1 omega subunit. When a sigma factor is associated with the core the holoenzyme is formed, which can initiate transcription. It depends on Mg(2+) as a cofactor. Zn(2+) is required as a cofactor.

The enzyme catalyses RNA(n) + a ribonucleoside 5'-triphosphate = RNA(n+1) + diphosphate. Its function is as follows. DNA-dependent RNA polymerase catalyzes the transcription of DNA into RNA using the four ribonucleoside triphosphates as substrates. In Mycobacterium tuberculosis (strain ATCC 25177 / H37Ra), this protein is DNA-directed RNA polymerase subunit beta'.